A 194-amino-acid polypeptide reads, in one-letter code: UPF0301 protein FTA_1286 (194 aa).

The protein belongs to the UPF0301 (AlgH) family.

This chain is UPF0301 protein FTA_1286, found in Francisella tularensis subsp. holarctica (strain FTNF002-00 / FTA).